The chain runs to 354 residues: Putative [LysW]-L-2-aminoadipate/[LysW]-L-glutamate phosphate reductase (354 aa).

Residues 10–13 (SGVI) and 34–36 (SRR) each bind NADP(+). The active site involves Cys153. Asn321 contacts NADP(+).

This sequence belongs to the NAGSA dehydrogenase family. Type 1 subfamily. LysY sub-subfamily.

It is found in the cytoplasm. It carries out the reaction [amino-group carrier protein]-C-terminal-N-(1-carboxy-5-oxopentan-1-yl)-L-glutamine + phosphate + NADP(+) = [amino-group carrier protein]-C-terminal-N-(1-carboxy-5-phosphooxy-5-oxopentan-1-yl)-L-glutamine + NADPH + H(+). The catalysed reaction is [amino-group carrier protein]-C-terminal-gamma-(L-glutamyl-5-semialdehyde)-L-glutamate + phosphate + NADP(+) = [amino-group carrier protein]-C-terminal-gamma-(5-phospho-L-glutamyl)-L-glutamate + NADPH + H(+). The protein operates within amino-acid biosynthesis; L-lysine biosynthesis via AAA pathway; L-lysine from L-alpha-aminoadipate (Thermus route): step 3/5. Its pathway is amino-acid biosynthesis; L-arginine biosynthesis. Its function is as follows. Involved in both the arginine and lysine biosynthetic pathways. In Caldivirga maquilingensis (strain ATCC 700844 / DSM 13496 / JCM 10307 / IC-167), this protein is Putative [LysW]-L-2-aminoadipate/[LysW]-L-glutamate phosphate reductase.